The chain runs to 2299 residues: Protein Ycf2 (2299 aa).

Residue 1642–1649 (GSIGTGRS) participates in ATP binding.

Belongs to the Ycf2 family.

The protein resides in the plastid. The protein localises to the chloroplast stroma. Functionally, probable ATPase of unknown function. Its presence in a non-photosynthetic plant (Epifagus virginiana) and experiments in tobacco indicate that it has an essential function which is probably not related to photosynthesis. This Nandina domestica (Heavenly bamboo) protein is Protein Ycf2.